Reading from the N-terminus, the 165-residue chain is Pro-MCH (165 aa).

The signal sequence occupies residues 1 to 21 (MAKMNLSSYILILTFSLFSQG). Position 143 is an isoleucine amide (I143). C153 and C162 are joined by a disulfide.

This sequence belongs to the melanin-concentrating hormone family. In terms of processing, differentially processed in the brain and in peripheral organs producing two neuropeptides; NEI and MCH. A third peptide, NGE, may also be produced. Preferential processing in neurons by prohormone convertase 2 (PC2) generates NEI. MCH is generated in neurons of the lateral hypothalmic area by several prohormone convertases including PC1/3, PC2 and PC5/6. As to expression, predominantly expressed in lateral hypothalamus, also detected in pallidum, neocortex and cerebellum. Also found in thymus, brown adipose tissue, duodenum and testis (spermatogonia, early spermatocytes and Sertoli cells). No expression in peripheral blood. In brain exclusively mature MCH and NEI peptides are present. In peripheral tissues a large product, encompassing the NEI and MCH domains of the precursor, is found predominantly.

It localises to the secreted. Functionally, MCH may act as a neurotransmitter or neuromodulator in a broad array of neuronal functions directed toward the regulation of goal-directed behavior, such as food intake, and general arousal. May also have a role in spermatocyte differentiation. The sequence is that of Pro-MCH (PMCH) from Homo sapiens (Human).